The primary structure comprises 94 residues: Large ribosomal subunit protein bL27 (94 aa).

A propeptide spanning residues 1-9 (MLELNLQLF) is cleaved from the precursor. The segment at 12 to 33 (KKGGGSTSNGRDSQAKRLGAKA) is disordered.

The protein belongs to the bacterial ribosomal protein bL27 family. In terms of processing, the N-terminus is cleaved by ribosomal processing cysteine protease Prp.

In Lactococcus lactis subsp. cremoris (strain MG1363), this protein is Large ribosomal subunit protein bL27.